Reading from the N-terminus, the 589-residue chain is (E)-beta-ocimene synthase, chloroplastic (589 aa).

The transit peptide at 1 to 25 (MAAHNLCFNSAFVCNVHHQKTQHFP) directs the protein to the chloroplast. Residues Arg-302, Asp-339, Asp-343, Arg-480, and Asn-483 each coordinate (2E,6E)-farnesyl diphosphate. The Mg(2+) site is built by Asp-339 and Asp-343. The DDXXD motif motif lies at 339–343 (DDIYD). Residues Asn-483, Thr-487, and Glu-491 each coordinate Mg(2+).

This sequence belongs to the terpene synthase family. Tpsb subfamily. Mg(2+) serves as cofactor. It depends on Mn(2+) as a cofactor. In terms of tissue distribution, expressed exclusively in flowers.

It localises to the plastid. Its subcellular location is the chloroplast. The enzyme catalyses (2E,6E)-farnesyl diphosphate = (3E,6E)-alpha-farnesene + diphosphate. The protein operates within secondary metabolite biosynthesis; terpenoid biosynthesis. Its function is as follows. Predominantly involved in monoterpene (C10) biosynthesis. Using GPP as substrate, the major product is (E)-beta-ocimene with minor amounts of (Z)-beta-ocimene and myrcene. Using FPP as substrate, could also be able to synthesize in vitro sesquiterpenes (C15) with (E,E)-alpha-farnesene as the major product and with (Z,E)-alpha-farnesene and (E,E)-beta-farnesene as minor products. In Arabidopsis thaliana (Mouse-ear cress), this protein is (E)-beta-ocimene synthase, chloroplastic (TPS02).